Consider the following 350-residue polypeptide: Biotin synthase (350 aa).

The 228-residue stretch at 41 to 268 folds into the Radical SAM core domain; that stretch reads NEVQISRLLS…KSRVRLSAGR (228 aa). [4Fe-4S] cluster contacts are provided by C56, C60, and C63. The [2Fe-2S] cluster site is built by C100, C131, C191, and R263.

The protein belongs to the radical SAM superfamily. Biotin synthase family. As to quaternary structure, homodimer. [4Fe-4S] cluster is required as a cofactor. Requires [2Fe-2S] cluster as cofactor.

It carries out the reaction (4R,5S)-dethiobiotin + (sulfur carrier)-SH + 2 reduced [2Fe-2S]-[ferredoxin] + 2 S-adenosyl-L-methionine = (sulfur carrier)-H + biotin + 2 5'-deoxyadenosine + 2 L-methionine + 2 oxidized [2Fe-2S]-[ferredoxin]. It participates in cofactor biosynthesis; biotin biosynthesis; biotin from 7,8-diaminononanoate: step 2/2. Functionally, catalyzes the conversion of dethiobiotin (DTB) to biotin by the insertion of a sulfur atom into dethiobiotin via a radical-based mechanism. This Shewanella sp. (strain ANA-3) protein is Biotin synthase.